A 349-amino-acid chain; its full sequence is E3 ubiquitin-protein ligase rnf146 (349 aa).

The segment at Met-1–Ser-21 is disordered. Positions Ser-10–Ser-21 are enriched in low complexity. An RING-type zinc finger spans residues Cys-41–Arg-79. The WWE domain occupies Glu-97 to Arg-173. 7 residues coordinate a glycoprotein: Tyr-113, Arg-116, Trp-120, Tyr-150, Gln-159, Arg-169, and Lys-181. Disordered regions lie at residues Thr-226–Leu-251 and Asp-264–Val-349. Residues Ser-283 to Ala-292 are compositionally biased toward polar residues. Residues Trp-298–Ala-307 are compositionally biased toward acidic residues. Basic and acidic residues predominate over residues Val-308–Leu-317.

It is found in the cytoplasm. The protein resides in the cytosol. The protein localises to the nucleus. It carries out the reaction S-ubiquitinyl-[E2 ubiquitin-conjugating enzyme]-L-cysteine + [acceptor protein]-L-lysine = [E2 ubiquitin-conjugating enzyme]-L-cysteine + N(6)-ubiquitinyl-[acceptor protein]-L-lysine.. The protein operates within protein modification; protein ubiquitination. In terms of biological role, E3 ubiquitin-protein ligase that specifically binds poly-ADP-ribosylated proteins and mediates their ubiquitination and subsequent degradation. May regulate many important biological processes, such as cell survival and DNA damage response. Acts as an activator of the Wnt signaling pathway by mediating the ubiquitination of poly-ADP-ribosylated proteins. Neuroprotective protein. Protects against cell death induced by DNA damaging agents and rescues cells from G1 arrest. Promotes cell survival after gamma-irradiation. Facilitates DNA repair. This Salmo salar (Atlantic salmon) protein is E3 ubiquitin-protein ligase rnf146 (rnf146).